Reading from the N-terminus, the 868-residue chain is Translation initiation factor IF-2 (868 aa).

Disordered regions lie at residues 49 to 72 and 92 to 276; these read LSKQ…TSTL and KRSD…EHLK. Over residues 92 to 240 the composition is skewed to basic and acidic residues; that stretch reads KRSDIEEQQR…KKAEAEEVHL (149 aa). Residues 368 to 537 form the tr-type G domain; sequence SRAPVVTIMG…VLQSELLDLQ (170 aa). Residues 377 to 384 form a G1 region; the sequence is GHVDHGKT. Position 377 to 384 (377 to 384) interacts with GTP; it reads GHVDHGKT. Residues 402-406 are G2; the sequence is GITQH. A G3 region spans residues 423 to 426; that stretch reads DTPG. GTP contacts are provided by residues 423–427 and 477–480; these read DTPGH and NKMD. Residues 477–480 are G4; that stretch reads NKMD. The G5 stretch occupies residues 513–515; sequence SAK.

It belongs to the TRAFAC class translation factor GTPase superfamily. Classic translation factor GTPase family. IF-2 subfamily.

It localises to the cytoplasm. One of the essential components for the initiation of protein synthesis. Protects formylmethionyl-tRNA from spontaneous hydrolysis and promotes its binding to the 30S ribosomal subunits. Also involved in the hydrolysis of GTP during the formation of the 70S ribosomal complex. The polypeptide is Translation initiation factor IF-2 (Alteromonas mediterranea (strain DSM 17117 / CIP 110805 / LMG 28347 / Deep ecotype)).